Reading from the N-terminus, the 388-residue chain is MKWLLVALVCLHLLEAAVIKVPLRKFKSIRETLKEKGLLKEFLNTHKYDPALKYRFGDFSVTYEPMDYLDAAYFGEISIGTPSQNFLVLFDTGSSNLWVPSVYCQSEACTTHNRFNPSKSSTFYTYDQTFSLEYGSGSLTGFFGYDTFTIQNIEVPNQEFGLSETEPGTNFLYAEFDGIMGLAYPSLSVGDATPALQGMVQDGTISSSVFSFYLSSQQGTDGGALVLGGVDSSLYTGDIYWAPVTRELYWQIGIDEFLISSEASGWCSQGCQAIVDTGTSLLTVPQEYMSDLLEATGAQENEYGEFLVDCDSTESLPTFTFVINGVEFPLSPSAYILNTDGQCMVGVEATYLSSQDGEPLWILGDVFLRAYYSVFDMANNRVGFAALA.

The N-terminal stretch at 1–16 (MKWLLVALVCLHLLEA) is a signal peptide. The propeptide at 17–59 (AVIKVPLRKFKSIRETLKEKGLLKEFLNTHKYDPALKYRFGDF) is activation peptide. The Peptidase A1 domain maps to 73–385 (YFGEISIGTP…DMANNRVGFA (313 aa)). Residue Asp91 is part of the active site. 2 disulfides stabilise this stretch: Cys104–Cys109 and Cys267–Cys271. Asp276 is an active-site residue. A disulfide bridge links Cys310 with Cys343.

The protein belongs to the peptidase A1 family.

The protein localises to the secreted. It catalyses the reaction More restricted specificity than pepsin A, but shows preferential cleavage at Tyr-|-Xaa bonds. High activity on hemoglobin.. In terms of biological role, hydrolyzes a variety of proteins. The sequence is that of Gastricsin (PGC) from Oryctolagus cuniculus (Rabbit).